A 265-amino-acid polypeptide reads, in one-letter code: Hydroxyethylthiazole kinase (265 aa).

Met50 is a binding site for substrate. 2 residues coordinate ATP: Arg125 and Thr171. Gly198 serves as a coordination point for substrate.

This sequence belongs to the Thz kinase family. Requires Mg(2+) as cofactor.

The enzyme catalyses 5-(2-hydroxyethyl)-4-methylthiazole + ATP = 4-methyl-5-(2-phosphooxyethyl)-thiazole + ADP + H(+). It functions in the pathway cofactor biosynthesis; thiamine diphosphate biosynthesis; 4-methyl-5-(2-phosphoethyl)-thiazole from 5-(2-hydroxyethyl)-4-methylthiazole: step 1/1. Catalyzes the phosphorylation of the hydroxyl group of 4-methyl-5-beta-hydroxyethylthiazole (THZ). This is Hydroxyethylthiazole kinase from Salmonella paratyphi B (strain ATCC BAA-1250 / SPB7).